The primary structure comprises 202 residues: Nudix hydrolase 13, mitochondrial (202 aa).

The Nudix hydrolase domain occupies 18 to 167 (NFRLVSGCIP…WMQSALEEFL (150 aa)). The short motif at 65-86 (GGWEDDETVLEAASREAMEEAG) is the Nudix box element. Mg(2+)-binding residues include Glu-80 and Glu-84.

Belongs to the Nudix hydrolase family. Monomer. The cofactor is Mg(2+). In terms of tissue distribution, expressed in roots, leaves, stems and inflorescences.

The protein localises to the mitochondrion. With respect to regulation, inhibited by fluoride. In terms of biological role, mediates the hydrolysis of some nucleoside diphosphate derivatives. Can use diadenosine 5',5'''-P(1)P(6) hexaphosphate (Ap(6)A), diadenosine 5',5'''-P(1)P(5) pentaphosphate (Ap(5)A) and adenosine tetraphosphate (p(4)A) as substrates, but not diadenosine 5',5'''-P(1)P(4) tetraphosphate (Ap(4)A), diadenosine 5',5'''-P(1)P(3) triphosphate (Ap(3)A), deoxyribonucleoside triphosphates, ribonucleoside triphosphates, diphosphoinositol pentakisphosphate (PP-InsP(5)) and 5-phospho-alpha-D-ribosyl diphosphate (PRPP). This is Nudix hydrolase 13, mitochondrial (NUDT13) from Arabidopsis thaliana (Mouse-ear cress).